Reading from the N-terminus, the 484-residue chain is Endoglucanase 3 (484 aa).

A signal peptide spans 1–21; that stretch reads MASPFFFVFLLSALSLENTYA. The Nucleophile role is filled by D77. N370 carries an N-linked (GlcNAc...) asparagine glycan. Active-site residues include H402, D453, and E462.

Belongs to the glycosyl hydrolase 9 (cellulase E) family. As to expression, specifically expressed in root cap cells.

Its subcellular location is the secreted. The catalysed reaction is Endohydrolysis of (1-&gt;4)-beta-D-glucosidic linkages in cellulose, lichenin and cereal beta-D-glucans.. In terms of biological role, may be involved in the sloughing (cell-cell separation) of the root cap cells from root tip. The chain is Endoglucanase 3 (CEL5) from Arabidopsis thaliana (Mouse-ear cress).